The primary structure comprises 319 residues: 4-hydroxy-3-methylbut-2-enyl diphosphate reductase (319 aa).

Cysteine 17 contributes to the [4Fe-4S] cluster binding site. (2E)-4-hydroxy-3-methylbut-2-enyl diphosphate is bound by residues histidine 46 and histidine 79. Dimethylallyl diphosphate contacts are provided by histidine 46 and histidine 79. Positions 46 and 79 each coordinate isopentenyl diphosphate. Cysteine 101 contributes to the [4Fe-4S] cluster binding site. Histidine 129 lines the (2E)-4-hydroxy-3-methylbut-2-enyl diphosphate pocket. Position 129 (histidine 129) interacts with dimethylallyl diphosphate. Histidine 129 serves as a coordination point for isopentenyl diphosphate. The Proton donor role is filled by glutamate 131. A (2E)-4-hydroxy-3-methylbut-2-enyl diphosphate-binding site is contributed by threonine 170. Cysteine 200 provides a ligand contact to [4Fe-4S] cluster. Residues serine 228, serine 229, asparagine 230, and serine 273 each contribute to the (2E)-4-hydroxy-3-methylbut-2-enyl diphosphate site. Positions 228, 229, 230, and 273 each coordinate dimethylallyl diphosphate. Isopentenyl diphosphate contacts are provided by serine 228, serine 229, asparagine 230, and serine 273.

Belongs to the IspH family. Requires [4Fe-4S] cluster as cofactor.

The catalysed reaction is isopentenyl diphosphate + 2 oxidized [2Fe-2S]-[ferredoxin] + H2O = (2E)-4-hydroxy-3-methylbut-2-enyl diphosphate + 2 reduced [2Fe-2S]-[ferredoxin] + 2 H(+). It carries out the reaction dimethylallyl diphosphate + 2 oxidized [2Fe-2S]-[ferredoxin] + H2O = (2E)-4-hydroxy-3-methylbut-2-enyl diphosphate + 2 reduced [2Fe-2S]-[ferredoxin] + 2 H(+). The protein operates within isoprenoid biosynthesis; dimethylallyl diphosphate biosynthesis; dimethylallyl diphosphate from (2E)-4-hydroxy-3-methylbutenyl diphosphate: step 1/1. Its pathway is isoprenoid biosynthesis; isopentenyl diphosphate biosynthesis via DXP pathway; isopentenyl diphosphate from 1-deoxy-D-xylulose 5-phosphate: step 6/6. Catalyzes the conversion of 1-hydroxy-2-methyl-2-(E)-butenyl 4-diphosphate (HMBPP) into a mixture of isopentenyl diphosphate (IPP) and dimethylallyl diphosphate (DMAPP). Acts in the terminal step of the DOXP/MEP pathway for isoprenoid precursor biosynthesis. This is 4-hydroxy-3-methylbut-2-enyl diphosphate reductase from Cereibacter sphaeroides (strain ATCC 17023 / DSM 158 / JCM 6121 / CCUG 31486 / LMG 2827 / NBRC 12203 / NCIMB 8253 / ATH 2.4.1.) (Rhodobacter sphaeroides).